The sequence spans 1343 residues: Xanthine dehydrogenase (1343 aa).

Residues 8–95 (SELVFFVNGK…GCAVTTVEGI (88 aa)) form the 2Fe-2S ferredoxin-type domain. [2Fe-2S] cluster-binding residues include Cys47, Cys52, Cys55, Cys77, Cys117, Cys120, Cys152, and Cys154. The FAD-binding PCMH-type domain occupies 235–424 (FSSERVTWYR…LGIHFQKTTP (190 aa)). Residues 263–270 (LVVGNTEV), Phe343, 353–357 (CLGGN), Asp366, Leu414, and Lys432 each bind FAD. Residues Gln780 and Phe811 each contribute to the Mo-molybdopterin site. Glu815 and Arg893 together coordinate substrate. Arg925 provides a ligand contact to Mo-molybdopterin. Position 927 (Phe927) interacts with substrate. Ala1092 is a Mo-molybdopterin binding site. Catalysis depends on Glu1275, which acts as the Proton acceptor.

This sequence belongs to the xanthine dehydrogenase family. Homodimer. The cofactor is FAD. Requires Mo-molybdopterin as cofactor. [2Fe-2S] cluster serves as cofactor.

It localises to the peroxisome. It carries out the reaction xanthine + NAD(+) + H2O = urate + NADH + H(+). The enzyme catalyses hypoxanthine + NAD(+) + H2O = xanthine + NADH + H(+). Functionally, key enzyme in purine degradation. Catalyzes the oxidation of hypoxanthine to xanthine. Catalyzes the oxidation of xanthine to uric acid. This chain is Xanthine dehydrogenase (ry), found in Drosophila pseudoobscura pseudoobscura (Fruit fly).